We begin with the raw amino-acid sequence, 196 residues long: Acyl-homoserine-lactone synthase (196 aa).

Belongs to the autoinducer synthase family.

The enzyme catalyses a fatty acyl-[ACP] + S-adenosyl-L-methionine = an N-acyl-L-homoserine lactone + S-methyl-5'-thioadenosine + holo-[ACP] + H(+). In terms of biological role, required for the synthesis of a yet unknown N-aceyl-homoserine lactone (N-aceyl-HSL), an autoinducer molecule which binds to PhzR and thus regulates phenazine production. This chain is Acyl-homoserine-lactone synthase (phzI), found in Pseudomonas fluorescens.